Reading from the N-terminus, the 612-residue chain is UvrABC system protein C (612 aa).

The region spanning 15-93 is the GIY-YIG domain; that stretch reads HLPGVYRMYD…IKQHQPKYNV (79 aa). A UVR domain is found at 203 to 238; that stretch reads SQVIDYLMQKMEIAASELDFETAARFRDQIQSVRAV.

This sequence belongs to the UvrC family. In terms of assembly, interacts with UvrB in an incision complex.

The protein resides in the cytoplasm. Its function is as follows. The UvrABC repair system catalyzes the recognition and processing of DNA lesions. UvrC both incises the 5' and 3' sides of the lesion. The N-terminal half is responsible for the 3' incision and the C-terminal half is responsible for the 5' incision. This Haemophilus ducreyi (strain 35000HP / ATCC 700724) protein is UvrABC system protein C.